The following is a 189-amino-acid chain: MGAKDLNQRIDAKRIEQGITTLDDIQFEERLLEAARTTRVTKGGKRFSFSALVVIGDKRGYVGFGLGKAREVPLSIAKAIEDAKKKTIRVPIVNGTIPHDVVGEYGSARIIAFPARRGTGVIAGGAAKPIFELAGYTDVLTKVVGSSNHHNVVRAVFDALLKLRDIDAIAKVKGATVEDLRERYNIYAR.

The S5 DRBM domain occupies 27–90 (FEERLLEAAR…EDAKKKTIRV (64 aa)).

This sequence belongs to the universal ribosomal protein uS5 family. In terms of assembly, part of the 30S ribosomal subunit. Contacts proteins S4 and S8.

Its function is as follows. With S4 and S12 plays an important role in translational accuracy. Located at the back of the 30S subunit body where it stabilizes the conformation of the head with respect to the body. The sequence is that of Small ribosomal subunit protein uS5 from Hydrogenobaculum sp. (strain Y04AAS1).